Consider the following 693-residue polypeptide: Polyribonucleotide nucleotidyltransferase (693 aa).

2 residues coordinate Mg(2+): Asp487 and Asp493. A KH domain is found at 554–613 (PRIYTIKINPEKIKDVIGKGGSIIRMLTEETGTVIEIKDDGIVKISAINGEKAKYAIKRI). In terms of domain architecture, S1 motif spans 623–691 (GKIYSGKVTR…RQGRIRLSMK (69 aa)).

Belongs to the polyribonucleotide nucleotidyltransferase family. As to quaternary structure, component of the RNA degradosome, which is a multiprotein complex involved in RNA processing and mRNA degradation. The cofactor is Mg(2+).

It is found in the cytoplasm. The enzyme catalyses RNA(n+1) + phosphate = RNA(n) + a ribonucleoside 5'-diphosphate. Its function is as follows. Involved in mRNA degradation. Catalyzes the phosphorolysis of single-stranded polyribonucleotides processively in the 3'- to 5'-direction. This Buchnera aphidicola subsp. Cinara cedri (strain Cc) protein is Polyribonucleotide nucleotidyltransferase.